The following is a 426-amino-acid chain: Putative acid phosphatase 1 (426 aa).

The N-terminal stretch at 1–18 (MRVLFYVFPFVIFALSQA) is a signal peptide. Residues 19–388 (QLISVHVIFR…HNWTMTTVSW (370 aa)) are Extracellular-facing. The active-site Nucleophile is the histidine 29. Residues asparagine 37 and asparagine 145 are each glycosylated (N-linked (GlcNAc...) asparagine). A disulfide bridge links cysteine 133 with cysteine 369. The active-site Proton donor is the aspartate 276. N-linked (GlcNAc...) asparagine glycosylation is present at asparagine 380. The chain crosses the membrane as a helical span at residues 389–409 (ILIGISAFLLIILIIMSYLAV). The Cytoplasmic segment spans residues 410–426 (RYKNRSVVTIKKVCLEN).

It belongs to the histidine acid phosphatase family.

Its subcellular location is the membrane. It catalyses the reaction a phosphate monoester + H2O = an alcohol + phosphate. This is Putative acid phosphatase 1 from Caenorhabditis briggsae.